The chain runs to 361 residues: Serpentine receptor class epsilon-32 (361 aa).

A run of 7 helical transmembrane segments spans residues 34 to 54 (IIEL…LYVM), 66 to 86 (ILYI…LITI), 124 to 144 (LLIF…YGIL), 168 to 188 (IPIA…LSVL), 195 to 215 (FLSH…YLFI), 256 to 276 (LVFV…ALAF), and 286 to 306 (FVEN…MLTI).

The protein belongs to the nematode receptor-like protein sre family.

The protein localises to the membrane. In Caenorhabditis elegans, this protein is Serpentine receptor class epsilon-32 (sre-32).